Here is a 793-residue protein sequence, read N- to C-terminus: Methionine--tRNA ligase (793 aa).

The 'HIGH' region motif lies at 11-21 (PYVNNFPHLGN). The Zn(2+) site is built by Cys-142, Cys-145, Cys-155, and Cys-158. Residues 334–338 (KFSKS) carry the 'KMSKS' region motif. ATP is bound at residue Lys-337. Over residues 581–590 (SQKDRKKSEK) the composition is skewed to basic and acidic residues. The disordered stretch occupies residues 581–610 (SQKDRKKSEKGCSACKDSGSSKSDAAASSA). Low complexity predominate over residues 591–610 (GCSACKDSGSSKSDAAASSA). Positions 622–727 (FSKKIALKTA…PWAAPGTPVI (106 aa)) constitute a tRNA-binding domain.

It belongs to the class-I aminoacyl-tRNA synthetase family. MetG type 1 subfamily. In terms of assembly, homodimer. Zn(2+) serves as cofactor.

It localises to the cytoplasm. It carries out the reaction tRNA(Met) + L-methionine + ATP = L-methionyl-tRNA(Met) + AMP + diphosphate. Is required not only for elongation of protein synthesis but also for the initiation of all mRNA translation through initiator tRNA(fMet) aminoacylation. The sequence is that of Methionine--tRNA ligase from Treponema denticola (strain ATCC 35405 / DSM 14222 / CIP 103919 / JCM 8153 / KCTC 15104).